The primary structure comprises 209 residues: ATP-dependent Clp protease proteolytic subunit 2 (209 aa).

The active-site Nucleophile is the Ser106. His131 is an active-site residue.

It belongs to the peptidase S14 family. As to quaternary structure, fourteen ClpP subunits assemble into 2 heptameric rings which stack back to back to give a disk-like structure with a central cavity, resembling the structure of eukaryotic proteasomes.

The protein localises to the cytoplasm. It catalyses the reaction Hydrolysis of proteins to small peptides in the presence of ATP and magnesium. alpha-casein is the usual test substrate. In the absence of ATP, only oligopeptides shorter than five residues are hydrolyzed (such as succinyl-Leu-Tyr-|-NHMec, and Leu-Tyr-Leu-|-Tyr-Trp, in which cleavage of the -Tyr-|-Leu- and -Tyr-|-Trp bonds also occurs).. Its function is as follows. Cleaves peptides in various proteins in a process that requires ATP hydrolysis. Has a chymotrypsin-like activity. Plays a major role in the degradation of misfolded proteins. In Mesorhizobium japonicum (strain LMG 29417 / CECT 9101 / MAFF 303099) (Mesorhizobium loti (strain MAFF 303099)), this protein is ATP-dependent Clp protease proteolytic subunit 2.